Consider the following 320-residue polypeptide: Malate dehydrogenase (320 aa).

Residues 10–15 (GSGMIG) and D34 contribute to the NAD(+) site. Substrate-binding residues include R83 and R89. NAD(+) contacts are provided by residues N96 and 119 to 121 (ITN). Substrate-binding residues include N121 and R152. H176 acts as the Proton acceptor in catalysis.

It belongs to the LDH/MDH superfamily. MDH type 3 family.

It carries out the reaction (S)-malate + NAD(+) = oxaloacetate + NADH + H(+). Its function is as follows. Catalyzes the reversible oxidation of malate to oxaloacetate. The sequence is that of Malate dehydrogenase from Brucella canis (strain ATCC 23365 / NCTC 10854 / RM-666).